The primary structure comprises 107 residues: uncharacterized protein (107 aa).

This is an uncharacterized protein from Bacillus subtilis (strain 168).